Here is a 506-residue protein sequence, read N- to C-terminus: Alpha-L-arabinofuranosidase B (506 aa).

An N-terminal signal peptide occupies residues 1 to 26; it reads MSSGLSLERACAVALGIVASASLVAA. The tract at residues 27 to 343 is catalytic; that stretch reads GPCDIYSSGG…ADIVAAKYAI (317 aa). 3 cysteine pairs are disulfide-bonded: cysteine 29/cysteine 39, cysteine 89/cysteine 94, and cysteine 184/cysteine 185. Asparagine 91 carries an N-linked (GlcNAc...) asparagine glycan. Aspartate 227 contributes to the substrate binding site. The active-site Nucleophile is glutamate 229. Substrate is bound by residues asparagine 230 and glycine 304. The Proton donor role is filled by aspartate 305. The tract at residues 344 to 506 is ABD; the sequence is ASLTSGPALT…VSWVVSTGFA (163 aa). An intrachain disulfide couples cysteine 409 to cysteine 447. 8 residues coordinate substrate: histidine 424, asparagine 426, phenylalanine 427, aspartate 443, histidine 471, glutamate 473, leucine 476, and aspartate 496.

Belongs to the glycosyl hydrolase 54 family.

The protein resides in the secreted. It carries out the reaction Hydrolysis of terminal non-reducing alpha-L-arabinofuranoside residues in alpha-L-arabinosides.. It functions in the pathway glycan metabolism; L-arabinan degradation. Functionally, alpha-L-arabinofuranosidase involved in the degradation of arabinoxylan, a major component of plant hemicellulose. Able to hydrolyze 1,5-, 1,3- and 1,2-alpha-linkages not only in L-arabinofuranosyl oligosaccharides, but also in polysaccharides containing terminal non-reducing L-arabinofuranoses in side chains, like L-arabinan, arabinogalactan and arabinoxylan. The chain is Alpha-L-arabinofuranosidase B (abfB) from Aspergillus oryzae (strain ATCC 42149 / RIB 40) (Yellow koji mold).